Here is a 549-residue protein sequence, read N- to C-terminus: Oxygen-dependent choline dehydrogenase (549 aa).

4 to 33 (DFVIIGSGSAGSALAYRLSEDGKNSVLVIE) provides a ligand contact to FAD. His-465 functions as the Proton acceptor in the catalytic mechanism. Residues 530 to 549 (PLARSNQEPWINPRAAVSDR) form a disordered region.

The protein belongs to the GMC oxidoreductase family. Requires FAD as cofactor.

It carries out the reaction choline + A = betaine aldehyde + AH2. The enzyme catalyses betaine aldehyde + NAD(+) + H2O = glycine betaine + NADH + 2 H(+). The protein operates within amine and polyamine biosynthesis; betaine biosynthesis via choline pathway; betaine aldehyde from choline (cytochrome c reductase route): step 1/1. Functionally, involved in the biosynthesis of the osmoprotectant glycine betaine. Catalyzes the oxidation of choline to betaine aldehyde and betaine aldehyde to glycine betaine at the same rate. The sequence is that of Oxygen-dependent choline dehydrogenase from Rhizobium etli (strain ATCC 51251 / DSM 11541 / JCM 21823 / NBRC 15573 / CFN 42).